A 160-amino-acid polypeptide reads, in one-letter code: MHILKKPDLSDPKMRAKLAKGMGHNYYGEPAWPNDLLYIFPVVILGTIACVVGLAVLDPAMLADKADPFATPLEILPEWYLYPVFQILRVVPNKLLGIALQTLVPLGLMLVPFIESFNKFQNPFRRPVAMTVFLFGTFTTIYLGIGAAMPIDKSLTLGLF.

Helical transmembrane passes span 36–56 (LLYIFPVVILGTIACVVGLAV), 95–115 (LLGIALQTLVPLGLMLVPFIE), and 128–148 (VAMTVFLFGTFTTIYLGIGAA).

Belongs to the cytochrome b family. PetD subfamily. The 4 large subunits of the cytochrome b6-f complex are cytochrome b6, subunit IV (17 kDa polypeptide, PetD), cytochrome f and the Rieske protein, while the 4 small subunits are PetG, PetL, PetM and PetN. The complex functions as a dimer.

The protein resides in the cellular thylakoid membrane. In terms of biological role, component of the cytochrome b6-f complex, which mediates electron transfer between photosystem II (PSII) and photosystem I (PSI), cyclic electron flow around PSI, and state transitions. The chain is Cytochrome b6-f complex subunit 4 from Synechococcus sp. (strain CC9902).